Here is a 146-residue protein sequence, read N- to C-terminus: Aspartate carbamoyltransferase regulatory chain (146 aa).

The Zn(2+) site is built by Cys-102, Cys-107, Cys-131, and Cys-134.

It belongs to the PyrI family. In terms of assembly, contains catalytic and regulatory chains. It depends on Zn(2+) as a cofactor.

Functionally, involved in allosteric regulation of aspartate carbamoyltransferase. The sequence is that of Aspartate carbamoyltransferase regulatory chain from Clostridium botulinum (strain Okra / Type B1).